A 361-amino-acid polypeptide reads, in one-letter code: MDSLPTSQRAVVQSEDVGSFEISRGRPIPVPSSSQILIKVFAVALNHCDWKMPARVPCPGTVDGADYSGTIIALGDTAALTSGFKIGDRVAGAQMASQRRRPWVGAFTEYILEEADSAWLVPDSLSWEEAAAIGCAATSSVGMALWKSLNLPGTPQNPITEDGKYVLVYGGSSASGTFAIQLLRLSGYNVVTTCSPKNFGLVESYGAEKAFDYHSPTCGEDIRTYTGNTLEYALDIITEAKTIRHCYAAIGRGGGRYCGFELLPHDLIATMRRSVKAEWVNGLEMTGLEIDLPGGYYCKANPELHIWFADLIKQYSVLISQGKLRPHPIQINKGGLEKVIDGLGQMKRREISGKKMVYPLV.

The Enoyl reductase (ER) domain maps to 15–357 (EDVGSFEISR…RREISGKKMV (343 aa)). Residues 48–51 (CDWK), 172–175 (SSAS), 195–198 (SPKN), Tyr213, 260–261 (FE), and 351–352 (IS) each bind NADP(+).

It belongs to the zinc-containing alcohol dehydrogenase family. Monomer.

It participates in mycotoxin biosynthesis. Its function is as follows. Trans-enoyl reductasee; part of the gene cluster that mediates the biosynthesis of GKK1032, fungal natural products containing a macrocyclic para-cyclophane connected to a decahydrofluorene ring system that show potent antitumor activities. Within the pathway, the PKS-NRPS gkaA, with the help of the trans-enoyl reductase gkaC, synthesize the polyketide-tyrosyl acyl thioester product which can be reductively off-loaded by the terminal reductase (R) domain in gkaA. The PKS module of gkaA acts in combination with the trans-acting enoyl reductase gkaC to produce a methylated polyketide attached to the ACP domain. In parallel, the adenylation (A) domain of the NRPS module activated L-tyrosine, which is then transferred to the ACP domain. The condensation (C) domain subsequently links this group to the polyketide chain, forming an enzyme-bound amide. The alpha/beta hydrolase gkaG is then required to catalyze the subsequent Knoevenagel condensation that affords the 3-pyrrolin-2-one ring, whereas the three proteins gkaB, gkadX and gkaZ then function synergistically to form the cyclophane. This chain is Trans-enoyl reductase gkaC, found in Penicillium citrinum.